Reading from the N-terminus, the 118-residue chain is Small ribosomal subunit protein uS13 (118 aa).

A disordered region spans residues 94–118 (GLPVRGQRTKTNARTRKGPRKPIKK).

The protein belongs to the universal ribosomal protein uS13 family. As to quaternary structure, part of the 30S ribosomal subunit. Forms a loose heterodimer with protein S19. Forms two bridges to the 50S subunit in the 70S ribosome.

Located at the top of the head of the 30S subunit, it contacts several helices of the 16S rRNA. In the 70S ribosome it contacts the 23S rRNA (bridge B1a) and protein L5 of the 50S subunit (bridge B1b), connecting the 2 subunits; these bridges are implicated in subunit movement. Contacts the tRNAs in the A and P-sites. This chain is Small ribosomal subunit protein uS13, found in Edwardsiella ictaluri (strain 93-146).